Here is a 458-residue protein sequence, read N- to C-terminus: Phosphoglucosamine mutase (458 aa).

Ser100 functions as the Phosphoserine intermediate in the catalytic mechanism. Mg(2+)-binding residues include Ser100, Asp239, Asp241, and Asp243. At Ser100 the chain carries Phosphoserine.

This sequence belongs to the phosphohexose mutase family. The cofactor is Mg(2+). Activated by phosphorylation.

It carries out the reaction alpha-D-glucosamine 1-phosphate = D-glucosamine 6-phosphate. Catalyzes the conversion of glucosamine-6-phosphate to glucosamine-1-phosphate. The chain is Phosphoglucosamine mutase from Dictyoglomus thermophilum (strain ATCC 35947 / DSM 3960 / H-6-12).